The sequence spans 108 residues: Envelope small membrane protein (108 aa).

Over 1–10 (MNLLNKSLEE) the chain is Virion surface. The helical transmembrane segment at 11 to 31 (NGSFLTALYIIVGFLALYLLG) threads the bilayer. Residues 32-108 (RALQAFVQAA…QDAQRDKLYS (77 aa)) lie on the Intravirion side of the membrane. The disordered stretch occupies residues 88–108 (NGWNNKNPANFQDAQRDKLYS). The segment covering 89–100 (GWNNKNPANFQD) has biased composition (polar residues).

This sequence belongs to the gammacoronaviruses E protein family. Homooligomer. Interacts with the M membrane protein in the budding compartment of the host cell, which is located between endoplasmic reticulum and the Golgi complex. The cytoplasmic tails of both proteins are important for this function. Interacts with Nucleoprotein.

It localises to the host Golgi apparatus membrane. Its function is as follows. Plays a central role in virus morphogenesis and assembly. Acts as a viroporin and self-assembles in host membranes forming pentameric protein-lipid pores that allow ion transport. Also plays a role in the induction of apoptosis. The chain is Envelope small membrane protein from Gallus gallus (Chicken).